The sequence spans 264 residues: Ribosomal RNA small subunit methyltransferase A (264 aa).

Positions 15, 17, 42, 63, 88, and 109 each coordinate S-adenosyl-L-methionine.

It belongs to the class I-like SAM-binding methyltransferase superfamily. rRNA adenine N(6)-methyltransferase family. RsmA subfamily.

It is found in the cytoplasm. The catalysed reaction is adenosine(1518)/adenosine(1519) in 16S rRNA + 4 S-adenosyl-L-methionine = N(6)-dimethyladenosine(1518)/N(6)-dimethyladenosine(1519) in 16S rRNA + 4 S-adenosyl-L-homocysteine + 4 H(+). Specifically dimethylates two adjacent adenosines (A1518 and A1519) in the loop of a conserved hairpin near the 3'-end of 16S rRNA in the 30S particle. May play a critical role in biogenesis of 30S subunits. This Nitrosococcus oceani (strain ATCC 19707 / BCRC 17464 / JCM 30415 / NCIMB 11848 / C-107) protein is Ribosomal RNA small subunit methyltransferase A.